The primary structure comprises 542 residues: CTP synthase (542 aa).

Positions 1–265 (MARYIFITGG…DSEVLCAFGI (265 aa)) are amidoligase domain. Ser13 contacts CTP. Ser13 contributes to the UTP binding site. Position 14 to 19 (14 to 19 (SLGKGI)) interacts with ATP. Tyr54 is a binding site for L-glutamine. Asp71 is an ATP binding site. Mg(2+)-binding residues include Asp71 and Glu139. Residues 146-148 (DIE), 186-191 (KTKPTQ), and Lys222 each bind CTP. UTP is bound by residues 186–191 (KTKPTQ) and Lys222. The Glutamine amidotransferase type-1 domain maps to 291–541 (TIAVVGKYTG…IEATVEQSRL (251 aa)). Ala353 contacts L-glutamine. Cys380 functions as the Nucleophile; for glutamine hydrolysis in the catalytic mechanism. Residues 381-384 (FGMQ), Glu404, and Arg469 contribute to the L-glutamine site. Active-site residues include His514 and Glu516.

It belongs to the CTP synthase family. Homotetramer.

It carries out the reaction UTP + L-glutamine + ATP + H2O = CTP + L-glutamate + ADP + phosphate + 2 H(+). It catalyses the reaction L-glutamine + H2O = L-glutamate + NH4(+). The catalysed reaction is UTP + NH4(+) + ATP = CTP + ADP + phosphate + 2 H(+). Its pathway is pyrimidine metabolism; CTP biosynthesis via de novo pathway; CTP from UDP: step 2/2. With respect to regulation, allosterically activated by GTP, when glutamine is the substrate; GTP has no effect on the reaction when ammonia is the substrate. The allosteric effector GTP functions by stabilizing the protein conformation that binds the tetrahedral intermediate(s) formed during glutamine hydrolysis. Inhibited by the product CTP, via allosteric rather than competitive inhibition. In terms of biological role, catalyzes the ATP-dependent amination of UTP to CTP with either L-glutamine or ammonia as the source of nitrogen. Regulates intracellular CTP levels through interactions with the four ribonucleotide triphosphates. This chain is CTP synthase, found in Bartonella quintana (strain Toulouse) (Rochalimaea quintana).